A 355-amino-acid chain; its full sequence is Enhancer of mRNA-decapping protein 1 (355 aa).

Disordered stretches follow at residues 1-146 (MSSD…VDGM), 210-230 (MSQPMSQPMSQPMSQPMSQPM), and 301-330 (NSTAKASVRSKGSPGSEGGSRRSQNWKSSQ). A compositionally biased stretch (polar residues) spans 39–49 (AQKQQLPNGEQ). Basic residues predominate over residues 57–67 (KQSRKRGSGRQ). The segment covering 91–110 (SIPSGSAGSESAQKETSAGQ) has biased composition (polar residues). The span at 123–142 (VPAGGPAGKSSSEPASASSA) shows a compositional bias: low complexity.

The protein belongs to the EDC family.

It is found in the cytoplasm. In terms of biological role, mRNA-binding protein which stimulates mRNA decapping. The sequence is that of Enhancer of mRNA-decapping protein 1 (EDC1) from Eremothecium gossypii (strain ATCC 10895 / CBS 109.51 / FGSC 9923 / NRRL Y-1056) (Yeast).